A 476-amino-acid polypeptide reads, in one-letter code: ATP synthase subunit beta, mitochondrial (476 aa).

Residue 156 to 163 (GAGVGKTV) participates in ATP binding.

In terms of assembly, F-type ATP synthases have 2 components, the catalytic core F(1) and the membrane-embedded component F(0), linked together by a central stalk and a peripheral stalk. The central stalk, also called rotor shaft, is often seen as part of F(1). The peripheral stalk is seen as part of F(0). F(0) contains the membrane channel next to the rotor. F-type ATP synthases form dimers but each monomer functions independently in ATP generation. The dimer consists of 18 different polypeptides: ATP1 (subunit alpha, part of F(1), 3 molecules per monomer), ATP2 (subunit beta, part of F(1), 3 molecules per monomer), ATP3 (subunit gamma, part of the central stalk), ATP4 (subunit b, part of the peripheral stalk), ATP5/OSCP (subunit 5/OSCP, part of the peripheral stalk), ATP6 (subunit a, part of the peripheral stalk), ATP7 (subunit d, part of the peripheral stalk), ATP8 (subunit 8, part of the peripheral stalk), OLI1 (subunit c, part of the rotor, 10 molecules per monomer), ATP14 (subunit h, part of the peripheral stalk), ATP15 (subunit epsilon, part of the central stalk), ATP16 (subunit delta, part of the central stalk), ATP17 (subunit f, part of the peripheral stalk), ATP18 (subunit i/j, part of the peripheral stalk). Dimer-specific subunits are ATP19 (subunit k, at interface between monomers), ATP20 (subunit g, at interface between monomers), TIM11 (subunit e, at interface between monomers). Also contains subunit L.

It is found in the mitochondrion inner membrane. It carries out the reaction ATP + H2O + 4 H(+)(in) = ADP + phosphate + 5 H(+)(out). Mitochondrial membrane ATP synthase (F(1)F(0) ATP synthase or Complex V) produces ATP from ADP in the presence of a proton gradient across the membrane which is generated by electron transport complexes of the respiratory chain. F-type ATP synthases consist of two structural domains, F(1) - containing the extramembraneous catalytic core, and F(0) - containing the membrane proton channel, linked together by a central stalk and a peripheral stalk. During catalysis, ATP synthesis in the catalytic domain of F(1) is coupled via a rotary mechanism of the central stalk subunits to proton translocation. Subunits alpha/ATP1 and beta/ATP2 form the catalytic core in F(1). Rotation of the central stalk against the surrounding alpha/ATP1(3)beta/ATP2(3) subunits leads to hydrolysis of ATP in three separate catalytic sites on the beta/ATP2 subunits. This Pichia angusta (Yeast) protein is ATP synthase subunit beta, mitochondrial.